Here is a 248-residue protein sequence, read N- to C-terminus: DNA repair protein RecO (248 aa).

Belongs to the RecO family.

In terms of biological role, involved in DNA repair and RecF pathway recombination. The sequence is that of DNA repair protein RecO from Streptomyces avermitilis (strain ATCC 31267 / DSM 46492 / JCM 5070 / NBRC 14893 / NCIMB 12804 / NRRL 8165 / MA-4680).